A 448-amino-acid chain; its full sequence is Chromosomal replication initiator protein DnaA (448 aa).

The domain I, interacts with DnaA modulators stretch occupies residues 1–93 (MEQIVSSLWS…KPTEQNLSAS (93 aa)). Residues 94 to 110 (STNKEELTQDTVHKFKT) are domain II. The tract at residues 111 to 328 (GLNGRLTFDN…GAINRVSAWC (218 aa)) is domain III, AAA+ region. ATP-binding residues include G156, G158, K159, and T160. Positions 329-448 (NFTKRQITID…YTNLTRKLSS (120 aa)) are domain IV, binds dsDNA.

This sequence belongs to the DnaA family. Oligomerizes as a right-handed, spiral filament on DNA at oriC.

Its subcellular location is the cytoplasm. In terms of biological role, plays an essential role in the initiation and regulation of chromosomal replication. ATP-DnaA binds to the origin of replication (oriC) to initiate formation of the DNA replication initiation complex once per cell cycle. Binds the DnaA box (a 9 base pair repeat at the origin) and separates the double-stranded (ds)DNA. Forms a right-handed helical filament on oriC DNA; dsDNA binds to the exterior of the filament while single-stranded (ss)DNA is stabiized in the filament's interior. The ATP-DnaA-oriC complex binds and stabilizes one strand of the AT-rich DNA unwinding element (DUE), permitting loading of DNA polymerase. After initiation quickly degrades to an ADP-DnaA complex that is not apt for DNA replication. Binds acidic phospholipids. This chain is Chromosomal replication initiator protein DnaA, found in Haemophilus ducreyi (strain 35000HP / ATCC 700724).